The following is a 100-amino-acid chain: Aspartyl/glutamyl-tRNA(Asn/Gln) amidotransferase subunit C (100 aa).

The protein belongs to the GatC family. As to quaternary structure, heterotrimer of A, B and C subunits.

It catalyses the reaction L-glutamyl-tRNA(Gln) + L-glutamine + ATP + H2O = L-glutaminyl-tRNA(Gln) + L-glutamate + ADP + phosphate + H(+). It carries out the reaction L-aspartyl-tRNA(Asn) + L-glutamine + ATP + H2O = L-asparaginyl-tRNA(Asn) + L-glutamate + ADP + phosphate + 2 H(+). Functionally, allows the formation of correctly charged Asn-tRNA(Asn) or Gln-tRNA(Gln) through the transamidation of misacylated Asp-tRNA(Asn) or Glu-tRNA(Gln) in organisms which lack either or both of asparaginyl-tRNA or glutaminyl-tRNA synthetases. The reaction takes place in the presence of glutamine and ATP through an activated phospho-Asp-tRNA(Asn) or phospho-Glu-tRNA(Gln). This Streptococcus pyogenes serotype M18 (strain MGAS8232) protein is Aspartyl/glutamyl-tRNA(Asn/Gln) amidotransferase subunit C.